Consider the following 237-residue polypeptide: Phosphoglycolate phosphatase (237 aa).

Residue aspartate 15 is the Nucleophile of the active site. Mg(2+) contacts are provided by aspartate 15, aspartate 17, and aspartate 177.

It belongs to the HAD-like hydrolase superfamily. CbbY/CbbZ/Gph/YieH family. The cofactor is Mg(2+).

The enzyme catalyses 2-phosphoglycolate + H2O = glycolate + phosphate. It functions in the pathway organic acid metabolism; glycolate biosynthesis; glycolate from 2-phosphoglycolate: step 1/1. Functionally, specifically catalyzes the dephosphorylation of 2-phosphoglycolate. Is involved in the dissimilation of the intracellular 2-phosphoglycolate formed during the DNA repair of 3'-phosphoglycolate ends, a major class of DNA lesions induced by oxidative stress. In Caulobacter vibrioides (strain ATCC 19089 / CIP 103742 / CB 15) (Caulobacter crescentus), this protein is Phosphoglycolate phosphatase.